The chain runs to 262 residues: Polyamine aminopropyltransferase (262 aa).

The 249-residue stretch at 1–249 (MWITQEITPY…DIHRAAFALP (249 aa)) folds into the PABS domain. Asn29 is an S-methyl-5'-thioadenosine binding site. Residue Asp83 participates in spermidine binding. Residue Asp155 is the Proton acceptor of the active site.

Belongs to the spermidine/spermine synthase family. In terms of assembly, homodimer or homotetramer.

It is found in the cytoplasm. It catalyses the reaction S-adenosyl 3-(methylsulfanyl)propylamine + putrescine = S-methyl-5'-thioadenosine + spermidine + H(+). The protein operates within amine and polyamine biosynthesis; spermidine biosynthesis; spermidine from putrescine: step 1/1. Catalyzes the irreversible transfer of a propylamine group from the amino donor S-adenosylmethioninamine (decarboxy-AdoMet) to putrescine (1,4-diaminobutane) to yield spermidine. The polypeptide is Polyamine aminopropyltransferase (Helicobacter pylori (strain HPAG1)).